Consider the following 400-residue polypeptide: Lysophospholipid transporter LplT (400 aa).

The next 12 helical transmembrane spans lie at 19 to 39, 53 to 73, 91 to 111, 139 to 159, 164 to 184, 195 to 213, 227 to 247, 257 to 277, 281 to 301, 304 to 324, 352 to 372, and 373 to 393; these read VIVA…ATLA, VLQM…GQIA, AGAA…LVGI, LMEA…GVLA, IAAL…NLFI, SWRL…VVLW, LFWG…PVAL, YLNA…AKLV, TVSR…IFSL, ALLP…FFVV, NSAM…GVPA, and VAIG…LWIW.

The protein belongs to the major facilitator superfamily. LplT (TC 2.A.1.42) family.

The protein resides in the cell inner membrane. Its function is as follows. Catalyzes the facilitated diffusion of 2-acyl-glycero-3-phosphoethanolamine (2-acyl-GPE) into the cell. The polypeptide is Lysophospholipid transporter LplT (Salmonella schwarzengrund (strain CVM19633)).